Consider the following 514-residue polypeptide: Glutamate--cysteine ligase, chloroplastic (514 aa).

Residues 1–55 (MALLSQAGGAYTVPSGHVSSRTGTKTVSGCVNVLRMKETYVSSYSRTLSTKSMLK) constitute a chloroplast transit peptide. Disulfide bonds link cysteine 178–cysteine 398 and cysteine 341–cysteine 356.

Belongs to the carboxylate-amine ligase family. Glutamate--cysteine ligase type 2 subfamily. Homodimer or monomer when oxidized or reduced, respectively. The Cys-178-Cys-398 disulfide bridge is known to modulate the enzyme activity according to the redox status. The oxidized form constitutes the active enzyme.

It localises to the plastid. The protein localises to the chloroplast. The enzyme catalyses L-cysteine + L-glutamate + ATP = gamma-L-glutamyl-L-cysteine + ADP + phosphate + H(+). It functions in the pathway sulfur metabolism; glutathione biosynthesis; glutathione from L-cysteine and L-glutamate: step 1/2. In terms of biological role, participates in the detoxification process. The sequence is that of Glutamate--cysteine ligase, chloroplastic (GSH1) from Brassica juncea (Indian mustard).